The following is a 179-amino-acid chain: Large ribosomal subunit protein uL10 (179 aa).

Positions K137–E179 are binds L7/L12 dimers.

As to quaternary structure, part of the ribosomal stalk of the 50S ribosomal subunit. The N-terminus interacts with L11 and 23S rRNA to form the base of the stalk. The C-terminus forms an elongated spine to which 3 L12 dimers bind in a sequential fashion forming a heptameric L10(L12)2(L12)2(L12)2 complex.

Functionally, forms part of the ribosomal stalk, playing a central role in the interaction of the ribosome with GTP-bound translation factors (such as IF-2, EF-Tu, EF-G and RF3). This is Large ribosomal subunit protein uL10 (rplJ) from Thermotoga maritima (strain ATCC 43589 / DSM 3109 / JCM 10099 / NBRC 100826 / MSB8).